The chain runs to 568 residues: MMGCWILNEGLSTILVLSWLGINFYLFIDTFYWYEEEESFHYTRVILGSTLAWARASALCLNFNCMLILIPVSRNLISFIRGTSICCRGPWRRQLDKNLRFHKLVAYGIAVNATIHIVAHFFNLERYHWSQSEEAQGLLAALSKLGNTPNESYLNPVRTFPTNTTTELLRTIAGVTGLVISLALVLIMTSSTEFIRQASYELFWYTHHVFIVFFLSLAIHGTGRIVRGQTQDSLSLHNITFCRDRYAEWQTVAQCPVPQFSGKEPSAWKWILGPVVLYACERIIRFWRFQQEVVITKVVSHPSGVLELHMKKRGFKMAPGQYILVQCPAISSLEWHPFTLTSAPQEDFFSVHIRAAGDWTAALLEAFGAEGQALQEPWSLPRLAVDGPFGTALTDVFHYPVCVCVAAGIGVTPFAALLKSIWYKCSEAQTPLKLSKVYFYWICRDARAFEWFADLLLSLETRMSEQGKTHFLSYHIFLTGWDENQALHIALHWDENTDVITGLKQKTFYGRPNWNNEFKQIAYNHPSSSIGVFFCGPKALSRTLQKMCHLYSSADPRGVHFYYNKESF.

Over 1 to 13 (MMGCWILNEGLST) the chain is Cytoplasmic. Residues 14-34 (ILVLSWLGINFYLFIDTFYWY) form a helical membrane-spanning segment. Over 35-51 (EEEESFHYTRVILGSTL) the chain is Extracellular. The helical transmembrane segment at 52–72 (AWARASALCLNFNCMLILIPV) threads the bilayer. One can recognise a Ferric oxidoreductase domain in the interval 55–284 (RASALCLNFN…VVLYACERII (230 aa)). The Cytoplasmic segment spans residues 73–103 (SRNLISFIRGTSICCRGPWRRQLDKNLRFHK). A helical membrane pass occupies residues 104 to 124 (LVAYGIAVNATIHIVAHFFNL). Residues 125 to 167 (ERYHWSQSEEAQGLLAALSKLGNTPNESYLNPVRTFPTNTTTE) are Extracellular-facing. Asn163 carries N-linked (GlcNAc...) asparagine glycosylation. The helical transmembrane segment at 168–188 (LLRTIAGVTGLVISLALVLIM) threads the bilayer. Over 189-201 (TSSTEFIRQASYE) the chain is Cytoplasmic. Residues 202–222 (LFWYTHHVFIVFFLSLAIHGT) form a helical membrane-spanning segment. Residues 223–395 (GRIVRGQTQD…DGPFGTALTD (173 aa)) lie on the Extracellular side of the membrane. N-linked (GlcNAc...) asparagine glycosylation is present at Asn238. One can recognise an FAD-binding FR-type domain in the interval 285 to 395 (RFWRFQQEVV…DGPFGTALTD (111 aa)). A helical transmembrane segment spans residues 396 to 416 (VFHYPVCVCVAAGIGVTPFAA). At 417–568 (LLKSIWYKCS…VHFYYNKESF (152 aa)) the chain is on the cytoplasmic side.

In terms of assembly, interacts with CYBA/p22phox. Heterodimerization with CYBA/p22phox is essential for its activity and cell membrane localization. It depends on heme as a cofactor. Post-translationally, N-glycosylated in a CYBA/p22phox-dependent manner.

Its subcellular location is the cell membrane. It carries out the reaction NADPH + 2 O2 = 2 superoxide + NADP(+) + H(+). Its activity is regulated as follows. Activated by the ototoxic drug cisplatin. Activated by NOXO1. Cooperatively activated by NCF1 and NCF2 or NOXA1 in a phorbol 12-myristate 13-acetate (PMA)-dependent manner. Inhibited by diphenyleneiodonium chloride. Its function is as follows. NADPH oxidase that catalyzes the generation of superoxide from molecular oxygen utilizing NADPH as an electron donor, upon formation of a complex with CYBA/p22phox. Plays a role in the biogenesis of otoconia/otolith, which are crystalline structures of the inner ear involved in the perception of gravity. This Homo sapiens (Human) protein is NADPH oxidase 3 (NOX3).